The primary structure comprises 663 residues: Polyunsaturated fatty acid lipoxygenase ALOX15 (663 aa).

A PLAT domain is found at 2–115 (GVYRVCVSTG…VQSLPVGTGC (114 aa)). Residues 116-663 (TTVGDPQGLF…PSIVENSVAI (548 aa)) form the Lipoxygenase domain. 5 residues coordinate Fe cation: H361, H366, H541, H545, and I663.

This sequence belongs to the lipoxygenase family. Interacts with PEBP1; in response to IL13/interleukin-13, prevents the interaction of PEBP1 with RAF1 to activate the ERK signaling cascade. It depends on Fe cation as a cofactor. Detected in reticulocytes (at protein level).

The protein localises to the cytoplasm. It localises to the cytosol. The protein resides in the cell membrane. It is found in the lipid droplet. The catalysed reaction is (5Z,8Z,11Z,14Z)-eicosatetraenoate + O2 = (12S)-hydroperoxy-(5Z,8Z,10E,14Z)-eicosatetraenoate. It catalyses the reaction (5Z,8Z,11Z,14Z)-eicosatetraenoate + O2 = (15S)-hydroperoxy-(5Z,8Z,11Z,13E)-eicosatetraenoate. The enzyme catalyses (9Z,12Z)-octadecadienoate + O2 = (13S)-hydroperoxy-(9Z,11E)-octadecadienoate. It carries out the reaction (5Z,8Z,11Z,14Z)-eicosatetraenoate + 2 O2 = (14R,15S)-dihydroperoxy-(5Z,8Z,10E,12E)-eicosatetraenoate. The catalysed reaction is (5Z,8Z,11Z,14Z)-eicosatetraenoate + 2 O2 = (8S,15S)-dihydroperoxy-(5Z,9E,11Z,13E)-eicosatetraenoate. It catalyses the reaction (14S,15R)-epoxy-(5Z,8Z,11Z)-eicosatrienoate + O2 = (8S)-hydroperoxy-(14S,15R)-epoxy-(5Z,9E,11Z)-eicosatrienoate. The enzyme catalyses (14S,15R)-epoxy-(5Z,8Z,11Z)-eicosatrienoate + O2 = (12S)-hydroperoxy-(14S,15R)-epoxy-(5Z,8Z,10E)-eicosatrienoate. It carries out the reaction (14R,15S)-epoxy-(5Z,8Z,11Z)-eicosatrienoate + O2 = (5S)-hydroperoxy-(14R,15S)-epoxy-(6E,8Z,11Z)-eicosatrienoate. The catalysed reaction is (14R,15S)-epoxy-(5Z,8Z,11Z)-eicosatrienoate + O2 = (12S)-hydroperoxy-(14R,15S)-epoxy-(5Z,8Z,10E)-eicosatrienoate. It catalyses the reaction (15R)-hydroperoxy-(5Z,8Z,11Z,13E)-eicosatetraenoate = 15-oxo-(5Z,8Z,11Z,13E)-eicosatetraenoate + H2O. The enzyme catalyses (15S)-hydroperoxy-(5Z,8Z,11Z,13E)-eicosatetraenoate = (14S,15S)-epoxy-(5Z,8Z,10E,12E)-eicosatetraenoate + H2O. It carries out the reaction (12S)-hydroperoxy-(5Z,8Z,10E,14Z)-eicosatetraenoate = (8S)-hydroxy-(11S,12S)-epoxy-(5Z,9E,14Z)-eicosatrienoate. The catalysed reaction is (4Z,7Z,10Z,13Z,16Z)-docosapentaenoate + O2 = 14-hydroperoxy-(4Z,7Z,10Z,12E,16Z)-docosapentaenoate. It catalyses the reaction (7Z,10Z,13Z,16Z,19Z)-docosapentaenoate + O2 = 14-hydroperoxy-(7Z,10Z,12E,16Z,19Z)-docosapentaenoate. The enzyme catalyses (4Z,7Z,10Z,13Z,16Z,19Z)-docosahexaenoate + O2 = (14S)-hydroperoxy-(4Z,7Z,10Z,12E,16Z,19Z)-docosahexaenoate. It carries out the reaction (4Z,7Z,10Z,13Z,16Z,19Z)-docosahexaenoate + O2 = (17S)-hydroperoxy-(4Z,7Z,10Z,13Z,15E,19Z)-docosahexaenoate. The catalysed reaction is (7S)-hydroperoxy-(4Z,8E,10Z,13Z,16Z,19Z)-docosahexaenoate + O2 = (7S,14S)-dihydroperoxy-(4Z,8E,10Z,12E,16Z,19Z)-docosahexaenoate. It catalyses the reaction (7S)-hydroperoxy-(4Z,8E,10Z,13Z,16Z,19Z)-docosahexaenoate + O2 = (7S,17S)-dihydroperoxy-(4Z,8E,10Z,13Z,15E,19Z)-docosahexaenoate. The enzyme catalyses (4Z,7Z,10Z,13Z,16Z,19Z)-docosahexaenoate + O2 = (11S)-hydroperoxy-(4Z,7Z,9E,13Z,16Z,19Z)-docosahexaenoate. It carries out the reaction N-(5Z,8Z,11Z,14Z)-eicosatetraenoyl-taurine + O2 = N-(15S)-hydroperoxy-(5Z,8Z,11Z,13E)-eicosatetraenoyl-taurine. The catalysed reaction is N-(5Z,8Z,11Z,14Z)-eicosatetraenoyl-gamma-aminobutanoate + O2 = N-(15S)-hydroperoxy-(5Z,8Z,11Z,13E)-eicosatetraenoyl-gamma-aminobutanoate. It catalyses the reaction N-(5Z,8Z,11Z,14Z)-eicosatetraenoyl-glycine + O2 = N-(15S)-hydroperoxy-(5Z,8Z,11Z,13E)-eicosatetraenoyl-glycine. The enzyme catalyses N-(5Z,8Z,11Z,14Z)-eicosatetraenoyl-L-alanine + O2 = N-(15S)-hydroperoxy-(5Z,8Z,11Z,13E)-eicosatetraenoyl-alanine. It carries out the reaction N-(5Z,8Z,11Z,14Z)-eicosatetraenoyl-taurine + O2 = N-(12S)-hydroperoxy-(5Z,8Z,10E,14Z)-eicosatetraenoyl-taurine. The catalysed reaction is N-(5Z,8Z,11Z,14Z)-eicosatetraenoyl-gamma-aminobutanoate + O2 = N-(12S)-hydroperoxy-(5Z,8Z,10E,14Z)-eicosatetraenoyl-gamma-aminobutanoate. It catalyses the reaction N-(5Z,8Z,11Z,14Z)-eicosatetraenoyl-glycine + O2 = N-(12S)-hydroperoxy-(5Z,8Z,10E,14Z)-eicosatetraenoyl-glycine. The enzyme catalyses N-(5Z,8Z,11Z,14Z)-eicosatetraenoyl-L-alanine + O2 = N-(12S)-hydroperoxy-(5Z,8Z,10E,14Z)-eicosatetraenoyl-alanine. The protein operates within lipid metabolism; hydroperoxy eicosatetraenoic acid biosynthesis. In terms of biological role, non-heme iron-containing dioxygenase that catalyzes the stereo-specific peroxidation of free and esterified polyunsaturated fatty acids generating a spectrum of bioactive lipid mediators. It inserts peroxyl groups at C12 or C15 of arachidonate ((5Z,8Z,11Z,14Z)-eicosatetraenoate) producing both 12-hydroperoxyeicosatetraenoate/12-HPETE and 15-hydroperoxyeicosatetraenoate/15-HPETE. It may then act on 12-HPETE to produce hepoxilins, which may show pro-inflammatory properties. Can also peroxidize linoleate ((9Z,12Z)-octadecadienoate) to 13-hydroperoxyoctadecadienoate. May participate in the sequential oxidations of DHA ((4Z,7Z,10Z,13Z,16Z,19Z)-docosahexaenoate) to generate specialized pro-resolving mediators (SPMs)like resolvin D5 ((7S,17S)-diHPDHA) and (7S,14S)-diHPDHA, that actively down-regulate the immune response and have anti-aggregation properties with platelets. Can convert epoxy fatty acids to hydroperoxy-epoxides derivatives followed by an intramolecular nucleophilic substitution leading to the formation of monocyclic endoperoxides. Plays an important role during the maintenance of self-tolerance by peroxidizing membrane-bound phosphatidylethanolamine which can then signal the sorting process for clearance of apoptotic cells during inflammation and prevent an autoimmune response. In addition to its role in the immune and inflammatory responses, this enzyme may play a role in epithelial wound healing in the cornea through production of lipoxin A4 (LXA(4)) and docosahexaenoic acid-derived neuroprotectin D1 (NPD1; 10R,17S-HDHA), both lipid autacoids exhibit anti-inflammatory and neuroprotective properties. Furthermore, it may regulate actin polymerization which is crucial for several biological processes such as the phagocytosis of apoptotic cells. It is also implicated in the generation of endogenous ligands for peroxisome proliferator activated receptor (PPAR-gamma), hence modulating macrophage development and function. It may also exert a negative effect on skeletal development by regulating bone mass through this pathway. As well as participates in ER stress and downstream inflammation in adipocytes, pancreatic islets, and liver. Finally, it is also involved in the cellular response to IL13/interleukin-13. The polypeptide is Polyunsaturated fatty acid lipoxygenase ALOX15 (Oryctolagus cuniculus (Rabbit)).